Consider the following 161-residue polypeptide: Protein-export protein SecB (161 aa).

It belongs to the SecB family. Homotetramer, a dimer of dimers. One homotetramer interacts with 1 SecA dimer.

The protein resides in the cytoplasm. One of the proteins required for the normal export of preproteins out of the cell cytoplasm. It is a molecular chaperone that binds to a subset of precursor proteins, maintaining them in a translocation-competent state. It also specifically binds to its receptor SecA. The chain is Protein-export protein SecB from Shewanella baltica (strain OS223).